Here is a 424-residue protein sequence, read N- to C-terminus: Isoflavipucine cluster transcription factor ATEG_00326 (424 aa).

The zn(2)-C6 fungal-type DNA-binding region spans 10 to 38 (CDRCHGQKLRCIHSGGGPCVRCAKAKATC). Residues 265 to 286 (ARMQTPEGTPERTSESSPSGPP) form a disordered region.

It is found in the nucleus. Transcription factor that regulates the expression of the gene cluster that mediates the biosynthesis of isoflavipucine. The sequence is that of Isoflavipucine cluster transcription factor ATEG_00326 from Aspergillus terreus (strain NIH 2624 / FGSC A1156).